We begin with the raw amino-acid sequence, 317 residues long: Methionyl-tRNA formyltransferase (317 aa).

Residue 112-115 (SLLP) participates in (6S)-5,6,7,8-tetrahydrofolate binding.

Belongs to the Fmt family.

The enzyme catalyses L-methionyl-tRNA(fMet) + (6R)-10-formyltetrahydrofolate = N-formyl-L-methionyl-tRNA(fMet) + (6S)-5,6,7,8-tetrahydrofolate + H(+). In terms of biological role, attaches a formyl group to the free amino group of methionyl-tRNA(fMet). The formyl group appears to play a dual role in the initiator identity of N-formylmethionyl-tRNA by promoting its recognition by IF2 and preventing the misappropriation of this tRNA by the elongation apparatus. The protein is Methionyl-tRNA formyltransferase of Mesorhizobium japonicum (strain LMG 29417 / CECT 9101 / MAFF 303099) (Mesorhizobium loti (strain MAFF 303099)).